Here is a 231-residue protein sequence, read N- to C-terminus: MRENRPVIALDFPTLEDVKAFLAKFPADEKLYVKIGMELYYAAGPEIVRYVKELGHSVFLDLKLHDIPNTVKSAMRVLSNLGVDMTNVHAAGGVEMMKAAREGLGEGPILIAVTQLTSTSEEQMRDFQNIQTTLQESVVHYAQKTAEAGLNGVVCSAHEVAKIKEATNQDFVCLTPGIRPAGAAVGDQKRVMTPDDAHQIGSDYIVVGRPITQAEDPVAAYHDIKAQWNDQ.

Residues D11, K34, 61 to 70 (DLKLHDIPNT), T117, R179, Q188, G208, and R209 each bind substrate. K63 functions as the Proton donor in the catalytic mechanism.

It belongs to the OMP decarboxylase family. Type 1 subfamily. In terms of assembly, homodimer.

The catalysed reaction is orotidine 5'-phosphate + H(+) = UMP + CO2. Its pathway is pyrimidine metabolism; UMP biosynthesis via de novo pathway; UMP from orotate: step 2/2. In terms of biological role, catalyzes the decarboxylation of orotidine 5'-monophosphate (OMP) to uridine 5'-monophosphate (UMP). The protein is Orotidine 5'-phosphate decarboxylase of Streptococcus thermophilus (strain CNRZ 1066).